The chain runs to 699 residues: Transcription factor MYC2 (699 aa).

Residues 25–60 are disordered; it reads PWGAASTPPPPPPPPHHHHQQQQQQVLPPPAAAPAA. Residues 93-158 form a JAZ-interaction domain region; the sequence is IDVSTGASLL…AAPDEAVEEE (66 aa). A disordered region spans residues 290–530; the sequence is DISVSKPPPP…EPLNHVEAER (241 aa). Residues 306 to 321 show a composition bias toward polar residues; it reads HFENGSTSTLTENPSP. Composition is skewed to low complexity over residues 335–349 and 387–412; these read PQRQQQQQQSSQAQQ and SSSGRRNPSPAPPAATASLTTAPGSL. Composition is skewed to polar residues over residues 413–449 and 459–472; these read FSQHTPTLTAAANDAKSNNQKRSMEATSRASNTNNHP and SFSSAPTTRPSTGT. A compositionally biased stretch (basic and acidic residues) spans 478–494; it reads SESDHSDLEASVREVES. A Nuclear localization signal motif is present at residues 506-514; it reads KRPRKRGRK. Over residues 507–516 the composition is skewed to basic residues; the sequence is RPRKRGRKPA. Over residues 517-530 the composition is skewed to basic and acidic residues; it reads NGREEPLNHVEAER. A basic motif; degenerate region spans residues 520-533; it reads EEPLNHVEAERQRR. The 50-residue stretch at 520–569 folds into the bHLH domain; sequence EEPLNHVEAERQRREKLNQRFYALRAVVPNVSKMDKASLLGDAISYINEL. The helix-loop-helix motif stretch occupies residues 534–569; sequence EKLNQRFYALRAVVPNVSKMDKASLLGDAISYINEL. Positions 582-611 are disordered; the sequence is TLQSQMESLKKERDARPPAPSGGGGDGGAR.

It belongs to the bHLH protein family. Interacts with TIFY3/JAZ1. In terms of tissue distribution, highly expressed in spikelets and floral organs.

It localises to the nucleus. In terms of biological role, transcriptional activator involved in jasmonate (JA) signaling pathway during spikelet development. Binds to the G2 region G-box (5'-CACGTG-3') of the MADS1 promoter and thus directly regulates the expression of MADS1. Its function in MADS1 activation is abolished by TIFY3/JAZ1 which directly target MYC2 during spikelet development. The protein is Transcription factor MYC2 of Oryza sativa subsp. japonica (Rice).